A 590-amino-acid polypeptide reads, in one-letter code: Putative DEAD-box ATP-dependent RNA helicase 51 (590 aa).

The tract at residues 1–81 (MHPIKLCARS…KQGEGKKGSG (81 aa)) is disordered. The span at 40–51 (AACNSEGENNAT) shows a compositional bias: polar residues. Over residues 59-78 (NKKMKEEKSKRKKKQGEGKK) the composition is skewed to basic and acidic residues. Residues 86-114 (KLFSDLPISDLTANAIRDMNYTHLTEIQA) carry the Q motif motif. The Helicase ATP-binding domain occupies 117–293 (IPPLMLGSDV…KLTFGSKEER (177 aa)). Residue 130–137 (AKTGSGKT) coordinates ATP. Residues 240-243 (DEAD) carry the DEAD box motif. One can recognise a Helicase C-terminal domain in the interval 329 to 481 (VLYAFLKKAL…ELVPKLQPYL (153 aa)). Residues 549–590 (LESSASKHRKKRNVNTGRRHGIGPSNPYGRKGSDDRRQFARF) are disordered. Residues 554 to 569 (SKHRKKRNVNTGRRHG) show a composition bias toward basic residues. The span at 579 to 590 (KGSDDRRQFARF) shows a compositional bias: basic and acidic residues.

It belongs to the DEAD box helicase family. DDX18/HAS1 subfamily.

It carries out the reaction ATP + H2O = ADP + phosphate + H(+). This Oryza sativa subsp. japonica (Rice) protein is Putative DEAD-box ATP-dependent RNA helicase 51.